The chain runs to 253 residues: LexA repressor (253 aa).

Residues 1-34 form a disordered region; that stretch reads MAIEKKPAGARGSRGSRTVKTLPNGKPDPASLSD. The H-T-H motif DNA-binding region spans 56 to 76; sequence IREIGDAAGLQSTSSVAYQLK. Basic and acidic residues predominate over residues 82 to 106; that stretch reads GFLRRDPNKPRAVDVRHLPETESRS. A disordered region spans residues 82 to 127; the sequence is GFLRRDPNKPRAVDVRHLPETESRSSKAATQAKSKAPQAGAHDPEL. Positions 107–120 are enriched in low complexity; that stretch reads SKAATQAKSKAPQA. Residues serine 177 and lysine 214 each act as for autocatalytic cleavage activity in the active site.

Belongs to the peptidase S24 family. In terms of assembly, homodimer.

It catalyses the reaction Hydrolysis of Ala-|-Gly bond in repressor LexA.. In terms of biological role, represses a number of genes involved in the response to DNA damage (SOS response), including recA and lexA. In the presence of single-stranded DNA, RecA interacts with LexA causing an autocatalytic cleavage which disrupts the DNA-binding part of LexA, leading to derepression of the SOS regulon and eventually DNA repair. This Corynebacterium glutamicum (strain R) protein is LexA repressor.